The primary structure comprises 458 residues: Probable M18 family aminopeptidase 1 (458 aa).

The Zn(2+) site is built by histidine 95, histidine 170, and histidine 434.

This sequence belongs to the peptidase M18 family. Requires Zn(2+) as cofactor.

The chain is Probable M18 family aminopeptidase 1 (apeA) from Borreliella burgdorferi (strain ATCC 35210 / DSM 4680 / CIP 102532 / B31) (Borrelia burgdorferi).